Here is a 785-residue protein sequence, read N- to C-terminus: AP-1 complex subunit gamma-like 2 (785 aa).

The segment at 369–379 (LSLALVNSSNV) is essential for ubiquitin-binding. A disordered region spans residues 592–617 (GPQADEEAKESKEAAQLSEAAPVPTE). The 116-residue stretch at 665–780 (APIPDLKVFE…QEIFEVNNLP (116 aa)) folds into the GAE domain.

The protein belongs to the adaptor complexes large subunit family. May interact with AP1S1/Sigma1A-adaptin and AP1S2/Sigma1B-adaptin. Probably does not interact with APB1. Interacts (via GAE domain) with RABEP1, NECAP1, CLINT1 and AFTPH/aftiphilin. In terms of assembly, (Microbial infection) Interacts with HBV major surface antigen L. Interacts with HBV core protein C in a ubiquitin-dependent manner. As to expression, expressed in all but one (skeletal muscle) tissues examined.

The protein resides in the golgi apparatus membrane. It localises to the cytoplasmic vesicle membrane. The protein localises to the endosome membrane. Functionally, may function in protein sorting in late endosomes or multivesucular bodies (MVBs). In terms of biological role, (Microbial infection) Involved in MVB-assisted maturation of hepatitis B virus (HBV). The chain is AP-1 complex subunit gamma-like 2 (AP1G2) from Homo sapiens (Human).